A 174-amino-acid chain; its full sequence is Co-chaperone protein HscB homolog (174 aa).

One can recognise a J domain in the interval 2–74 (NYFELFKFSP…IRRAEHMLSL (73 aa)).

The protein belongs to the HscB family. As to quaternary structure, interacts with HscA and stimulates its ATPase activity.

Co-chaperone involved in the maturation of iron-sulfur cluster-containing proteins. Seems to help targeting proteins to be folded toward HscA. This Shewanella baltica (strain OS155 / ATCC BAA-1091) protein is Co-chaperone protein HscB homolog.